Reading from the N-terminus, the 206-residue chain is Probable N-acetyltransferase 14 (206 aa).

The region spanning 6–206 (LSVREMREDE…MLVREFSKDL (201 aa)) is the N-acetyltransferase domain. Residues 57–77 (FILASFALALLLPVFLAVAAV) traverse the membrane as a helical segment.

It belongs to the camello family.

The protein resides in the membrane. In terms of biological role, probable acetyltransferase that binds the 5'-GGACTACAG-3' sequence of coproporphyrinogen oxidase promoter. Able to activate transcription of a reporter construct in vitro. Its function is as follows. Probable acetyltransferase. Functionally, may act as a transcription factor regulating the expression of coproporphyrinogen oxidase by binding to a promoter regulatory element. The sequence is that of Probable N-acetyltransferase 14 (Nat14) from Mus musculus (Mouse).